The sequence spans 1345 residues: DNA-directed RNA polymerase subunit beta (1345 aa).

The protein belongs to the RNA polymerase beta chain family. The RNAP catalytic core consists of 2 alpha, 1 beta, 1 beta' and 1 omega subunit. When a sigma factor is associated with the core the holoenzyme is formed, which can initiate transcription.

It carries out the reaction RNA(n) + a ribonucleoside 5'-triphosphate = RNA(n+1) + diphosphate. Functionally, DNA-dependent RNA polymerase catalyzes the transcription of DNA into RNA using the four ribonucleoside triphosphates as substrates. This chain is DNA-directed RNA polymerase subunit beta, found in Shewanella sp. (strain ANA-3).